Reading from the N-terminus, the 251-residue chain is Triosephosphate isomerase (251 aa).

12 to 14 (NWK) serves as a coordination point for substrate. His99 functions as the Electrophile in the catalytic mechanism. The Proton acceptor role is filled by Glu169. Residues Gly175, Ser214, and 235 to 236 (GG) each bind substrate.

It belongs to the triosephosphate isomerase family. Homodimer.

It is found in the cytoplasm. The catalysed reaction is D-glyceraldehyde 3-phosphate = dihydroxyacetone phosphate. It functions in the pathway carbohydrate biosynthesis; gluconeogenesis. It participates in carbohydrate degradation; glycolysis; D-glyceraldehyde 3-phosphate from glycerone phosphate: step 1/1. In terms of biological role, involved in the gluconeogenesis. Catalyzes stereospecifically the conversion of dihydroxyacetone phosphate (DHAP) to D-glyceraldehyde-3-phosphate (G3P). This chain is Triosephosphate isomerase, found in Bradyrhizobium sp. (strain BTAi1 / ATCC BAA-1182).